A 209-amino-acid chain; its full sequence is ATP synthase subunit O, mitochondrial (209 aa).

Belongs to the ATPase delta chain family. In terms of assembly, F-type ATPases have 2 components, CF(1) - the catalytic core - and CF(0) - the membrane proton channel. CF(1) has five subunits: alpha(3), beta(3), gamma(1), delta(1), epsilon(1). CF(0) has three main subunits: a, b and c.

The protein localises to the mitochondrion. It is found in the mitochondrion inner membrane. Mitochondrial membrane ATP synthase (F(1)F(0) ATP synthase or Complex V) produces ATP from ADP in the presence of a proton gradient across the membrane which is generated by electron transport complexes of the respiratory chain. F-type ATPases consist of two structural domains, F(1) - containing the extramembraneous catalytic core and F(0) - containing the membrane proton channel, linked together by a central stalk and a peripheral stalk. During catalysis, ATP synthesis in the catalytic domain of F(1) is coupled via a rotary mechanism of the central stalk subunits to proton translocation. Part of the complex F(0) domain and the peripheric stalk, which acts as a stator to hold the catalytic alpha(3)beta(3) subcomplex and subunit a/ATP6 static relative to the rotary elements. In Drosophila melanogaster (Fruit fly), this protein is ATP synthase subunit O, mitochondrial.